We begin with the raw amino-acid sequence, 239 residues long: Probable transcriptional regulatory protein CD630_07950 (239 aa).

Belongs to the TACO1 family.

The protein localises to the cytoplasm. This chain is Probable transcriptional regulatory protein CD630_07950, found in Clostridioides difficile (strain 630) (Peptoclostridium difficile).